The chain runs to 193 residues: dTTP/UTP pyrophosphatase (193 aa).

D75 serves as the catalytic Proton acceptor.

The protein belongs to the Maf family. YhdE subfamily. A divalent metal cation serves as cofactor.

It localises to the cytoplasm. The enzyme catalyses dTTP + H2O = dTMP + diphosphate + H(+). The catalysed reaction is UTP + H2O = UMP + diphosphate + H(+). Its function is as follows. Nucleoside triphosphate pyrophosphatase that hydrolyzes dTTP and UTP. May have a dual role in cell division arrest and in preventing the incorporation of modified nucleotides into cellular nucleic acids. This Chlorobium luteolum (strain DSM 273 / BCRC 81028 / 2530) (Pelodictyon luteolum) protein is dTTP/UTP pyrophosphatase.